A 201-amino-acid chain; its full sequence is Superoxide dismutase [Mn] (201 aa).

Mn(2+) is bound by residues His-27, His-81, Asp-163, and His-167.

This sequence belongs to the iron/manganese superoxide dismutase family. In terms of assembly, homodimer. Requires Mn(2+) as cofactor.

The protein localises to the secreted. The catalysed reaction is 2 superoxide + 2 H(+) = H2O2 + O2. Its function is as follows. Destroys superoxide anion radicals which are normally produced within the cells and which are toxic to biological systems. This is Superoxide dismutase [Mn] (sodA) from Streptococcus pyogenes serotype M1.